A 362-amino-acid chain; its full sequence is Endopolygalacturonase II (362 aa).

Positions 1–20 are cleaved as a signal peptide; the sequence is MHSFASLLRYGLAAGATLAS. The propeptide occupies 21–27; sequence ASPIEAR. An intrachain disulfide couples Cys-30 to Cys-45. Residues 156-186 form a PbH1 1 repeat; the sequence is SDDITLTDITINNADGDSLGGHNTDAFDVGN. Asp-201 (proton donor) is an active-site residue. A disulfide bridge links Cys-203 with Cys-219. PbH1 repeat units follow at residues 209 to 229, 238 to 259, 267 to 289, and 301 to 322; these read GENIWFTGGTCIGGHGLSIGS, VKNVTIEHSTVSNSENAVRIKT, VSEITYSNIVMSGISDYGVVIQQ, and TNGVTITDVKLESVTGTVDSKA. His-223 is an active-site residue. Asn-240 carries an N-linked (GlcNAc...) asparagine glycan. Intrachain disulfides connect Cys-329–Cys-334 and Cys-353–Cys-362.

The protein belongs to the glycosyl hydrolase 28 family.

It is found in the secreted. It catalyses the reaction (1,4-alpha-D-galacturonosyl)n+m + H2O = (1,4-alpha-D-galacturonosyl)n + (1,4-alpha-D-galacturonosyl)m.. Its function is as follows. Involved in maceration and soft-rotting of plant tissue. Hydrolyzes the 1,4-alpha glycosidic bonds of de-esterified pectate in the smooth region of the plant cell wall. This Aspergillus awamori (Black koji mold) protein is Endopolygalacturonase II (pgaII).